Consider the following 84-residue polypeptide: Small ribosomal subunit protein eS27-like (84 aa).

The span at 1-16 (MPLARDLLHPSLDEEK) shows a compositional bias: basic and acidic residues. Residues 1-23 (MPLARDLLHPSLDEEKKKHKKKR) form a disordered region. The segment at 38–60 (PGCYKITTVFSHAQTVVLCVGCS) adopts a C4-type zinc-finger fold.

Belongs to the eukaryotic ribosomal protein eS27 family. Requires Zn(2+) as cofactor.

The chain is Small ribosomal subunit protein eS27-like (RPS27L) from Bos taurus (Bovine).